We begin with the raw amino-acid sequence, 231 residues long: Large ribosomal subunit protein uL1 (231 aa).

Belongs to the universal ribosomal protein uL1 family. In terms of assembly, part of the 50S ribosomal subunit.

Binds directly to 23S rRNA. The L1 stalk is quite mobile in the ribosome, and is involved in E site tRNA release. Functionally, protein L1 is also a translational repressor protein, it controls the translation of the L11 operon by binding to its mRNA. The chain is Large ribosomal subunit protein uL1 from Lactobacillus delbrueckii subsp. bulgaricus (strain ATCC 11842 / DSM 20081 / BCRC 10696 / JCM 1002 / NBRC 13953 / NCIMB 11778 / NCTC 12712 / WDCM 00102 / Lb 14).